Consider the following 728-residue polypeptide: Catalase-peroxidase (728 aa).

Positions 91–218 (WHSAGTYRTA…LAAVQMGLIY (128 aa)) form a cross-link, tryptophyl-tyrosyl-methioninium (Trp-Tyr) (with M-244). The active-site Proton acceptor is the H92. The tryptophyl-tyrosyl-methioninium (Tyr-Met) (with W-91) cross-link spans 218–244 (YVNPEGPDGNPDPVAAARDIRDTFARM). Residue H259 coordinates heme b.

It belongs to the peroxidase family. Peroxidase/catalase subfamily. As to quaternary structure, homodimer or homotetramer. Requires heme b as cofactor. Post-translationally, formation of the three residue Trp-Tyr-Met cross-link is important for the catalase, but not the peroxidase activity of the enzyme.

It catalyses the reaction H2O2 + AH2 = A + 2 H2O. It carries out the reaction 2 H2O2 = O2 + 2 H2O. Its function is as follows. Bifunctional enzyme with both catalase and broad-spectrum peroxidase activity. This Burkholderia mallei (strain NCTC 10247) protein is Catalase-peroxidase.